We begin with the raw amino-acid sequence, 237 residues long: Large ribosomal subunit protein uL1 (237 aa).

It belongs to the universal ribosomal protein uL1 family. In terms of assembly, part of the 50S ribosomal subunit.

Binds directly to 23S rRNA. The L1 stalk is quite mobile in the ribosome, and is involved in E site tRNA release. In terms of biological role, protein L1 is also a translational repressor protein, it controls the translation of the L11 operon by binding to its mRNA. The sequence is that of Large ribosomal subunit protein uL1 from Chloroflexus aggregans (strain MD-66 / DSM 9485).